A 269-amino-acid chain; its full sequence is Protein tsct-1 (269 aa).

It belongs to the TSC-22/Dip/Bun family.

The protein is Protein tsct-1 of Caenorhabditis elegans.